Reading from the N-terminus, the 197-residue chain is FMN-dependent NADH:quinone oxidoreductase (197 aa).

Residues Ser10 and 16–18 (SIS) each bind FMN.

This sequence belongs to the azoreductase type 1 family. In terms of assembly, homodimer. Requires FMN as cofactor.

It carries out the reaction 2 a quinone + NADH + H(+) = 2 a 1,4-benzosemiquinone + NAD(+). It catalyses the reaction N,N-dimethyl-1,4-phenylenediamine + anthranilate + 2 NAD(+) = 2-(4-dimethylaminophenyl)diazenylbenzoate + 2 NADH + 2 H(+). Quinone reductase that provides resistance to thiol-specific stress caused by electrophilic quinones. In terms of biological role, also exhibits azoreductase activity. Catalyzes the reductive cleavage of the azo bond in aromatic azo compounds to the corresponding amines. This Erythrobacter litoralis (strain HTCC2594) protein is FMN-dependent NADH:quinone oxidoreductase.